The sequence spans 292 residues: UPF0761 membrane protein Ping_3482 (292 aa).

The next 6 helical transmembrane spans lie at 43 to 63, 100 to 120, 139 to 159, 179 to 199, 209 to 229, and 243 to 263; these read LLSI…FPVF, MSMM…STID, FTIY…SLAL, LLSL…YTLV, ALIG…LFRL, and ALAV…IVLI.

Belongs to the UPF0761 family.

It localises to the cell inner membrane. The polypeptide is UPF0761 membrane protein Ping_3482 (Psychromonas ingrahamii (strain DSM 17664 / CCUG 51855 / 37)).